The chain runs to 452 residues: Enolase (452 aa).

Glutamine 167 serves as a coordination point for (2R)-2-phosphoglycerate. The active-site Proton donor is glutamate 209. Mg(2+)-binding residues include aspartate 250, glutamate 307, and aspartate 334. (2R)-2-phosphoglycerate is bound by residues lysine 359, arginine 388, serine 389, and lysine 410. Lysine 359 functions as the Proton acceptor in the catalytic mechanism.

Belongs to the enolase family. Mg(2+) serves as cofactor.

The protein localises to the cytoplasm. It is found in the secreted. Its subcellular location is the cell surface. The catalysed reaction is (2R)-2-phosphoglycerate = phosphoenolpyruvate + H2O. The protein operates within carbohydrate degradation; glycolysis; pyruvate from D-glyceraldehyde 3-phosphate: step 4/5. Functionally, catalyzes the reversible conversion of 2-phosphoglycerate (2-PG) into phosphoenolpyruvate (PEP). It is essential for the degradation of carbohydrates via glycolysis. The protein is Enolase of Mesomycoplasma hyopneumoniae (strain 232) (Mycoplasma hyopneumoniae).